A 701-amino-acid chain; its full sequence is Polyribonucleotide nucleotidyltransferase (701 aa).

Residues Asp-487 and Asp-493 each coordinate Mg(2+). In terms of domain architecture, KH spans 554-613; sequence PTMLQMKIDSDKIRDVIGKGGATIRAICEETKASIDIEDDGSVKIYGETKEAAEAAKQRV. The S1 motif domain occupies 623 to 691; sequence GKIYVGKVER…NRGRIKLSIK (69 aa).

It belongs to the polyribonucleotide nucleotidyltransferase family. As to quaternary structure, component of the RNA degradosome, which is a multiprotein complex involved in RNA processing and mRNA degradation. It depends on Mg(2+) as a cofactor.

It is found in the cytoplasm. The enzyme catalyses RNA(n+1) + phosphate = RNA(n) + a ribonucleoside 5'-diphosphate. Functionally, involved in mRNA degradation. Catalyzes the phosphorolysis of single-stranded polyribonucleotides processively in the 3'- to 5'-direction. In Pseudomonas paraeruginosa (strain DSM 24068 / PA7) (Pseudomonas aeruginosa (strain PA7)), this protein is Polyribonucleotide nucleotidyltransferase.